The chain runs to 131 residues: Small ribosomal subunit protein uS11 (131 aa).

Belongs to the universal ribosomal protein uS11 family. Part of the 30S ribosomal subunit. Interacts with proteins S7 and S18. Binds to IF-3.

In terms of biological role, located on the platform of the 30S subunit, it bridges several disparate RNA helices of the 16S rRNA. Forms part of the Shine-Dalgarno cleft in the 70S ribosome. This Deinococcus deserti (strain DSM 17065 / CIP 109153 / LMG 22923 / VCD115) protein is Small ribosomal subunit protein uS11.